The following is a 448-amino-acid chain: Putative RNA-ligase (448 aa).

It belongs to the asfivirus M448R family.

It localises to the virion. The polypeptide is Putative RNA-ligase (Ornithodoros (relapsing fever ticks)).